A 433-amino-acid chain; its full sequence is Serine hydroxymethyltransferase (433 aa).

121 to 123 (AHV) lines the (6S)-5,6,7,8-tetrahydrofolate pocket. K227 carries the N6-(pyridoxal phosphate)lysine modification. Position 243 (E243) interacts with (6S)-5,6,7,8-tetrahydrofolate.

This sequence belongs to the SHMT family. Homodimer. It depends on pyridoxal 5'-phosphate as a cofactor.

It is found in the cytoplasm. The enzyme catalyses 5,10-methylenetetrahydrosulfopterin + glycine + H2O = tetrahydrosulfopterin + L-serine. The protein operates within amino-acid biosynthesis; glycine biosynthesis; glycine from L-serine: step 1/1. Its activity is regulated as follows. Is completely inhibited by addition of NaCNBH(3) in vitro; this reagent is a known inhibitor of PLP enzymes, that reduces the internal aldimine of PLP to the catalytically inactive and stable secondary amine. Is also inhibited by L-cysteine, which forms a thiazolidine complex with the active site PLP. Functionally, catalyzes the reversible interconversion of serine and glycine with the modified folate sulfopterin serving as the one-carbon carrier. Cannot use tetrahydrofolate (THF or H4PteGlu) as the pteridine substrate. Also exhibits a pteridine-independent aldolase activity toward beta-hydroxyamino acids, producing glycine and aldehydes, via a retro-aldol mechanism. Thus, is able to catalyze the cleavage of both allo-threonine and beta-phenylserine. In Saccharolobus solfataricus (strain ATCC 35092 / DSM 1617 / JCM 11322 / P2) (Sulfolobus solfataricus), this protein is Serine hydroxymethyltransferase.